The chain runs to 724 residues: Palmitoyltransferase AKR1 (724 aa).

Residues 1-308 (MSGQLNVAED…HAKMVTFFTP (308 aa)) lie on the Cytoplasmic side of the membrane. ANK repeat units lie at residues 54–84 (PTLVKYHAACQRGDLKTVKDMIEAGVIDVKA), 90–119 (EQVSGLHWASANNRLNLVRYLIAQGADVNI), 124–153 (LEATPLHWASKSGYVYIVHCLLEHGADPLI), 157–187 (QGYNLLHTSTFSSEVMLITYVLFTGQIPVDS), 191–220 (TGKTALHWAAYQGDPNTVEALLKFDADVRV), and 224–253 (GGFTPLHWATVKGHPHVLKALIEHGSDVFL). Residues 309-329 (WLILGLILSFFAYFSILLAIL) form a helical membrane-spanning segment. The Lumenal segment spans residues 330–331 (GC). A helical transmembrane segment spans residues 332-352 (LLTVLAAGYGLYNFVFPSFIL). The Cytoplasmic segment spans residues 353–360 (MKRIVIFK). A helical transmembrane segment spans residues 361–381 (TPLLAGILSGTIFWLLYVWLF). Residues 382–392 (KMLPATFDDEP) are Lumenal-facing. The helical transmembrane segment at 393–413 (ILNLTVFALFAGVVFLLTKLL) threads the bilayer. At 414-489 (QSDPGYIVPA…YNYIGFRNHK (76 aa)) the chain is on the cytoplasmic side. The DHHC domain maps to 446 to 496 (HFCIHSWIRLPLRAKYKRFVHSVILRYDHYCPWIYNYIGFRNHKIFIYFIL). Residue C476 is the S-palmitoyl cysteine intermediate of the active site. Residues 490-510 (IFIYFILLLDLGILALAKLCL) form a helical membrane-spanning segment. At 511-543 (EYFDELKDHAKNKDALKCSILSKDLCAGFTYDP) the chain is on the lumenal side. A helical transmembrane segment spans residues 544-564 (FTLFLLEWVCVQGMWILALSF). Residues 565-724 (VQFFECLKGV…ERVISIEEIV (160 aa)) are Cytoplasmic-facing.

This sequence belongs to the DHHC palmitoyltransferase family. AKR/ZDHHC17 subfamily.

The protein localises to the early endosome membrane. Its subcellular location is the golgi apparatus membrane. It carries out the reaction L-cysteinyl-[protein] + hexadecanoyl-CoA = S-hexadecanoyl-L-cysteinyl-[protein] + CoA. In terms of biological role, palmitoyltransferase specific for casein kinase 1. The protein is Palmitoyltransferase AKR1 (AKR1) of Eremothecium gossypii (strain ATCC 10895 / CBS 109.51 / FGSC 9923 / NRRL Y-1056) (Yeast).